The primary structure comprises 160 residues: SsrA-binding protein (160 aa).

The protein belongs to the SmpB family.

The protein localises to the cytoplasm. In terms of biological role, required for rescue of stalled ribosomes mediated by trans-translation. Binds to transfer-messenger RNA (tmRNA), required for stable association of tmRNA with ribosomes. tmRNA and SmpB together mimic tRNA shape, replacing the anticodon stem-loop with SmpB. tmRNA is encoded by the ssrA gene; the 2 termini fold to resemble tRNA(Ala) and it encodes a 'tag peptide', a short internal open reading frame. During trans-translation Ala-aminoacylated tmRNA acts like a tRNA, entering the A-site of stalled ribosomes, displacing the stalled mRNA. The ribosome then switches to translate the ORF on the tmRNA; the nascent peptide is terminated with the 'tag peptide' encoded by the tmRNA and targeted for degradation. The ribosome is freed to recommence translation, which seems to be the essential function of trans-translation. This chain is SsrA-binding protein, found in Erwinia tasmaniensis (strain DSM 17950 / CFBP 7177 / CIP 109463 / NCPPB 4357 / Et1/99).